The sequence spans 859 residues: Active breakpoint cluster region-related protein (859 aa).

Residues 31-84 form a disordered region; that stretch reads AEGHEEQKGPPEGSETMPYIDESPTMSPQLSARSQGGGESISPTPPEGLAPGVE. Polar residues predominate over residues 54–64; the sequence is PTMSPQLSARS. Phosphoserine is present on S57. The 194-residue stretch at 91–284 folds into the DH domain; the sequence is MRKLVLSGFL…QNFLSSINED (194 aa). A PH domain is found at 301–459; that stretch reads QLVKDGFLVE…WREAIQKLQK (159 aa). Residues 484–613 form the C2 domain; that stretch reads TVHNIPVTSN…ESKNWHTDVI (130 aa). The Rho-GAP domain occupies 647–845; it reads VKISVVTKRE…YYLQHPPISF (199 aa).

As to quaternary structure, interacts with DLG4. As to expression, expressed in brain, including the cortex, hippocampus, cerebellum, and brainstem, as well as the spinal cord (at protein level).

The protein localises to the cell projection. It is found in the dendritic spine. It localises to the axon. Its subcellular location is the synapse. Functionally, protein with a unique structure having two opposing regulatory activities toward small GTP-binding proteins. The C-terminus is a GTPase-activating protein domain which stimulates GTP hydrolysis by RAC1, RAC2 and CDC42. Accelerates the intrinsic rate of GTP hydrolysis of RAC1 or CDC42, leading to down-regulation of the active GTP-bound form. The central Dbl homology (DH) domain functions as guanine nucleotide exchange factor (GEF) that modulates the GTPases CDC42, RHOA and RAC1. Promotes the conversion of CDC42, RHOA and RAC1 from the GDP-bound to the GTP-bound form. Functions as an important negative regulator of neuronal RAC1 activity. Regulates macrophage functions such as CSF-1 directed motility and phagocytosis through the modulation of RAC1 activity. This chain is Active breakpoint cluster region-related protein, found in Rattus norvegicus (Rat).